The following is a 46-amino-acid chain: Endochitinase 4 (46 aa).

It belongs to the glycosyl hydrolase 19 family. Chitinase class I subfamily.

It carries out the reaction Random endo-hydrolysis of N-acetyl-beta-D-glucosaminide (1-&gt;4)-beta-linkages in chitin and chitodextrins.. Defense against chitin-containing fungal and bacterial pathogens. The sequence is that of Endochitinase 4 from Arachis hypogaea (Peanut).